A 293-amino-acid polypeptide reads, in one-letter code: Homoserine kinase (293 aa).

Pro-84 to Ala-94 is an ATP binding site.

This sequence belongs to the GHMP kinase family. Homoserine kinase subfamily.

Its subcellular location is the cytoplasm. The catalysed reaction is L-homoserine + ATP = O-phospho-L-homoserine + ADP + H(+). It functions in the pathway amino-acid biosynthesis; L-threonine biosynthesis; L-threonine from L-aspartate: step 4/5. Functionally, catalyzes the ATP-dependent phosphorylation of L-homoserine to L-homoserine phosphate. This chain is Homoserine kinase, found in Wolinella succinogenes (strain ATCC 29543 / DSM 1740 / CCUG 13145 / JCM 31913 / LMG 7466 / NCTC 11488 / FDC 602W) (Vibrio succinogenes).